The chain runs to 131 residues: Small ribosomal subunit protein uS11 (131 aa).

The protein belongs to the universal ribosomal protein uS11 family. Part of the 30S ribosomal subunit. Interacts with proteins S7 and S18. Binds to IF-3.

In terms of biological role, located on the platform of the 30S subunit, it bridges several disparate RNA helices of the 16S rRNA. Forms part of the Shine-Dalgarno cleft in the 70S ribosome. The protein is Small ribosomal subunit protein uS11 of Halorhodospira halophila (strain DSM 244 / SL1) (Ectothiorhodospira halophila (strain DSM 244 / SL1)).